A 411-amino-acid chain; its full sequence is Imidazolonepropionase (411 aa).

Fe(3+) is bound by residues H78 and H80. Zn(2+) is bound by residues H78 and H80. 4-imidazolone-5-propanoate contacts are provided by R87, Y150, and H183. Residue Y150 coordinates N-formimidoyl-L-glutamate. H248 provides a ligand contact to Fe(3+). H248 serves as a coordination point for Zn(2+). Q251 is a 4-imidazolone-5-propanoate binding site. Residue D322 coordinates Fe(3+). D322 contacts Zn(2+). 2 residues coordinate N-formimidoyl-L-glutamate: N324 and G326. Residue S327 coordinates 4-imidazolone-5-propanoate.

Belongs to the metallo-dependent hydrolases superfamily. HutI family. Requires Zn(2+) as cofactor. Fe(3+) serves as cofactor.

The protein localises to the cytoplasm. It carries out the reaction 4-imidazolone-5-propanoate + H2O = N-formimidoyl-L-glutamate. It participates in amino-acid degradation; L-histidine degradation into L-glutamate; N-formimidoyl-L-glutamate from L-histidine: step 3/3. Functionally, catalyzes the hydrolytic cleavage of the carbon-nitrogen bond in imidazolone-5-propanoate to yield N-formimidoyl-L-glutamate. It is the third step in the universal histidine degradation pathway. The protein is Imidazolonepropionase of Flavobacterium johnsoniae (strain ATCC 17061 / DSM 2064 / JCM 8514 / BCRC 14874 / CCUG 350202 / NBRC 14942 / NCIMB 11054 / UW101) (Cytophaga johnsonae).